A 724-amino-acid polypeptide reads, in one-letter code: Eukaryotic elongation factor 2 kinase (724 aa).

The residue at position 2 (Ala2) is an N-acetylalanine. A Phosphoserine modification is found at Ser27. Ser61 is modified (phosphoserine; by autocatalysis). Phosphoserine occurs at positions 70, 73, and 77. The interval 80–93 is calmodulin-binding; that stretch reads FKEAWKHAIEKAKH. The Alpha-type protein kinase domain maps to 115-325; the sequence is RYNAVTGEWL…ICQSMGLTPF (211 aa). Ser242 is subject to Phosphoserine. 295–301 is a binding site for ATP; that stretch reads GDGNLGV. Phosphothreonine; by autocatalysis occurs at positions 347 and 352. The disordered stretch occupies residues 353 to 476; it reads EEKCGSPRIR…HESDEDSLGS (124 aa). Ser358 is modified (phosphoserine; by MAPK13 and CDK1). The span at 358 to 376 shows a compositional bias: low complexity; that stretch reads SPRIRTLSSSRPPLLLRLS. Ser365 carries the post-translational modification Phosphoserine; by autocatalysis, RPS6KA1 and RPS6KB1. The span at 385–403 shows a compositional bias: polar residues; the sequence is SDVTFDSLPSSPSSATPHS. At Ser391 the chain carries Phosphoserine. Phosphoserine; by AMPK is present on Ser397. Basic and acidic residues-rich tracts occupy residues 421–435 and 444–469; these read GPRD…RDSE and SEKR…RHES. Phosphoserine is present on residues Ser434, Ser444, and Ser469. The residue at position 473 (Ser473) is a Phosphoserine; by autocatalysis. Ser476 carries the phosphoserine modification. The residue at position 499 (Ser499) is a Phosphoserine; by PKA.

Belongs to the protein kinase superfamily. Alpha-type protein kinase family. In terms of assembly, monomer or homodimer. Interacts with Calmodulin/CALM1; this interaction is strictly required for phosphorylation activity. Post-translationally, autophosphorylated at multiple residues, Thr-347 being the major site. Phosphorylated by AMP-activated protein kinase AMPK at Ser-397 leading to EEF2K activation and protein synthesis inhibition. Phosphorylated by TRPM7 at Ser-77 resulting in improved protein stability, higher EE2F phosphorylated and subsequently reduced rate of protein synthesis. Phosphorylation by other kinases such as CDK1 and MAPK13 at Ser-358 or RPS6KA1 and RPS6KB1 at Ser-365 instead decrease EEF2K activity and promote protein synthesis. In terms of tissue distribution, ubiquitously expressed. Particularly abundant in skeletal muscle and heart.

The enzyme catalyses [translation elongation factor 2] + ATP = [translation elongation factor 2]-phosphate + ADP + H(+). Its activity is regulated as follows. Undergoes calcium/calmodulin-dependent intramolecular autophosphorylation, and this results in it becoming partially calcium/calmodulin-independent. In terms of biological role, threonine kinase that regulates protein synthesis by controlling the rate of peptide chain elongation. Upon activation by a variety of upstream kinases including AMPK or TRPM7, phosphorylates the elongation factor EEF2 at a single site, renders it unable to bind ribosomes and thus inactive. In turn, the rate of protein synthesis is reduced. The sequence is that of Eukaryotic elongation factor 2 kinase (Eef2k) from Mus musculus (Mouse).